Reading from the N-terminus, the 236-residue chain is Leucyl/phenylalanyl-tRNA--protein transferase (236 aa).

This sequence belongs to the L/F-transferase family.

It is found in the cytoplasm. The enzyme catalyses N-terminal L-lysyl-[protein] + L-leucyl-tRNA(Leu) = N-terminal L-leucyl-L-lysyl-[protein] + tRNA(Leu) + H(+). It carries out the reaction N-terminal L-arginyl-[protein] + L-leucyl-tRNA(Leu) = N-terminal L-leucyl-L-arginyl-[protein] + tRNA(Leu) + H(+). It catalyses the reaction L-phenylalanyl-tRNA(Phe) + an N-terminal L-alpha-aminoacyl-[protein] = an N-terminal L-phenylalanyl-L-alpha-aminoacyl-[protein] + tRNA(Phe). Functions in the N-end rule pathway of protein degradation where it conjugates Leu, Phe and, less efficiently, Met from aminoacyl-tRNAs to the N-termini of proteins containing an N-terminal arginine or lysine. The chain is Leucyl/phenylalanyl-tRNA--protein transferase from Shewanella putrefaciens (strain CN-32 / ATCC BAA-453).